Consider the following 303-residue polypeptide: Tyrosine recombinase XerC (303 aa).

The 85-residue stretch at 1 to 85 (MRADLDAFLE…ATRGLYQYLL (85 aa)) folds into the Core-binding (CB) domain. One can recognise a Tyr recombinase domain in the interval 106 to 285 (KLPRTLDADR…DFQHLASVYD (180 aa)). Catalysis depends on residues Arg-146, Lys-170, His-237, Arg-240, and His-263. Residue Tyr-272 is the O-(3'-phospho-DNA)-tyrosine intermediate of the active site.

It belongs to the 'phage' integrase family. XerC subfamily. Forms a cyclic heterotetrameric complex composed of two molecules of XerC and two molecules of XerD.

It localises to the cytoplasm. Functionally, site-specific tyrosine recombinase, which acts by catalyzing the cutting and rejoining of the recombining DNA molecules. The XerC-XerD complex is essential to convert dimers of the bacterial chromosome into monomers to permit their segregation at cell division. It also contributes to the segregational stability of plasmids. The protein is Tyrosine recombinase XerC of Pseudomonas aeruginosa (strain LESB58).